We begin with the raw amino-acid sequence, 425 residues long: Serine--tRNA ligase (425 aa).

226–228 (TSE) contributes to the L-serine binding site. ATP is bound by residues 257 to 259 (RRE) and Val-273. Glu-280 contacts L-serine. 344 to 347 (ELTS) is an ATP binding site. Thr-382 serves as a coordination point for L-serine.

The protein belongs to the class-II aminoacyl-tRNA synthetase family. Type-1 seryl-tRNA synthetase subfamily. In terms of assembly, homodimer. The tRNA molecule binds across the dimer.

It localises to the cytoplasm. The catalysed reaction is tRNA(Ser) + L-serine + ATP = L-seryl-tRNA(Ser) + AMP + diphosphate + H(+). The enzyme catalyses tRNA(Sec) + L-serine + ATP = L-seryl-tRNA(Sec) + AMP + diphosphate + H(+). Its pathway is aminoacyl-tRNA biosynthesis; selenocysteinyl-tRNA(Sec) biosynthesis; L-seryl-tRNA(Sec) from L-serine and tRNA(Sec): step 1/1. In terms of biological role, catalyzes the attachment of serine to tRNA(Ser). Is also able to aminoacylate tRNA(Sec) with serine, to form the misacylated tRNA L-seryl-tRNA(Sec), which will be further converted into selenocysteinyl-tRNA(Sec). The sequence is that of Serine--tRNA ligase from Mycobacterium avium (strain 104).